An 83-amino-acid polypeptide reads, in one-letter code: Cytochrome b559 subunit alpha (83 aa).

A helical transmembrane segment spans residues 21–35 (VIHSITIPSLFVAGW). His23 lines the heme pocket.

It belongs to the PsbE/PsbF family. In terms of assembly, heterodimer of an alpha subunit and a beta subunit. PSII is composed of 1 copy each of membrane proteins PsbA, PsbB, PsbC, PsbD, PsbE, PsbF, PsbH, PsbI, PsbJ, PsbK, PsbL, PsbM, PsbT, PsbX, PsbY, PsbZ, Psb30/Ycf12, at least 3 peripheral proteins of the oxygen-evolving complex and a large number of cofactors. It forms dimeric complexes. It depends on heme b as a cofactor.

The protein resides in the plastid. The protein localises to the chloroplast thylakoid membrane. Functionally, this b-type cytochrome is tightly associated with the reaction center of photosystem II (PSII). PSII is a light-driven water:plastoquinone oxidoreductase that uses light energy to abstract electrons from H(2)O, generating O(2) and a proton gradient subsequently used for ATP formation. It consists of a core antenna complex that captures photons, and an electron transfer chain that converts photonic excitation into a charge separation. The polypeptide is Cytochrome b559 subunit alpha (Nephroselmis olivacea (Green alga)).